Consider the following 637-residue polypeptide: Chaperone protein DnaK (637 aa).

Position 198 is a phosphothreonine; by autocatalysis (Thr-198). The interval 597–637 (MYQQAAQESGQTEGAAQDPKGAAQDDDVVDADFEEVKDHKK) is disordered. Over residues 600-610 (QAAQESGQTEG) the composition is skewed to polar residues. The segment covering 620 to 629 (QDDDVVDADF) has biased composition (acidic residues).

The protein belongs to the heat shock protein 70 family.

Its function is as follows. Acts as a chaperone. The polypeptide is Chaperone protein DnaK (Desulforapulum autotrophicum (strain ATCC 43914 / DSM 3382 / VKM B-1955 / HRM2) (Desulfobacterium autotrophicum)).